Reading from the N-terminus, the 201-residue chain is Adenylyl-sulfate kinase (201 aa).

ATP is bound at residue Gly-35 to Ser-42. Ser-109 acts as the Phosphoserine intermediate in catalysis.

The protein belongs to the APS kinase family.

The enzyme catalyses adenosine 5'-phosphosulfate + ATP = 3'-phosphoadenylyl sulfate + ADP + H(+). The protein operates within sulfur metabolism; hydrogen sulfide biosynthesis; sulfite from sulfate: step 2/3. In terms of biological role, catalyzes the synthesis of activated sulfate. The protein is Adenylyl-sulfate kinase of Bacteroides thetaiotaomicron (strain ATCC 29148 / DSM 2079 / JCM 5827 / CCUG 10774 / NCTC 10582 / VPI-5482 / E50).